Here is a 222-residue protein sequence, read N- to C-terminus: Ras-related protein Rab11C (222 aa).

22 to 29 is a GTP binding site; the sequence is GDSAVGKT. The Effector region signature appears at 44 to 52; the sequence is SKATIGVEF. GTP contacts are provided by residues 70 to 74 and 128 to 131; these read DTAGQ and NKTD. 2 S-geranylgeranyl cysteine lipidation sites follow: C219 and C220.

Belongs to the small GTPase superfamily. Rab family.

Its subcellular location is the cell membrane. The protein is Ras-related protein Rab11C (RAB11C) of Nicotiana tabacum (Common tobacco).